The primary structure comprises 357 residues: Large ribosomal subunit protein mL45 (357 aa).

The disordered stretch occupies residues 333-357 (EAKALPLRTTEKLEEAKKEKEQQEI). A compositionally biased stretch (basic and acidic residues) spans 341 to 357 (TTEKLEEAKKEKEQQEI).

Belongs to the mitochondrion-specific ribosomal protein mL45 family.

Its subcellular location is the mitochondrion. This Caenorhabditis elegans protein is Large ribosomal subunit protein mL45 (mrpl-45).